The following is a 1438-amino-acid chain: DNA polymerase III PolC-type (1438 aa).

The Exonuclease domain occupies 422–578 (YVVFDVETTG…YDTEATAYIF (157 aa)).

This sequence belongs to the DNA polymerase type-C family. PolC subfamily.

It is found in the cytoplasm. It carries out the reaction DNA(n) + a 2'-deoxyribonucleoside 5'-triphosphate = DNA(n+1) + diphosphate. Required for replicative DNA synthesis. This DNA polymerase also exhibits 3' to 5' exonuclease activity. The chain is DNA polymerase III PolC-type from Staphylococcus epidermidis (strain ATCC 35984 / DSM 28319 / BCRC 17069 / CCUG 31568 / BM 3577 / RP62A).